The sequence spans 134 residues: Putative pre-16S rRNA nuclease (134 aa).

It belongs to the YqgF nuclease family.

It is found in the cytoplasm. Could be a nuclease involved in processing of the 5'-end of pre-16S rRNA. This Hydrogenovibrio crunogenus (strain DSM 25203 / XCL-2) (Thiomicrospira crunogena) protein is Putative pre-16S rRNA nuclease.